We begin with the raw amino-acid sequence, 371 residues long: Probable L-aspartate decarboxylase (371 aa).

Lys232 is subject to N6-(pyridoxal phosphate)lysine.

The protein belongs to the group II decarboxylase family. MfnA subfamily. Pyridoxal 5'-phosphate is required as a cofactor.

The enzyme catalyses L-aspartate + H(+) = beta-alanine + CO2. Its pathway is cofactor biosynthesis; coenzyme A biosynthesis. Functionally, catalyzes the decarboxylation of L-aspartate to produce beta-alanine. The sequence is that of Probable L-aspartate decarboxylase from Pyrococcus furiosus (strain ATCC 43587 / DSM 3638 / JCM 8422 / Vc1).